Here is a 79-residue protein sequence, read N- to C-terminus: Acyl carrier protein (79 aa).

The Carrier domain occupies 2-77 (SEIGERVKKI…DATKFLEKNA (76 aa)). The residue at position 37 (Ser-37) is an O-(pantetheine 4'-phosphoryl)serine.

It belongs to the acyl carrier protein (ACP) family. 4'-phosphopantetheine is transferred from CoA to a specific serine of apo-ACP by AcpS. This modification is essential for activity because fatty acids are bound in thioester linkage to the sulfhydryl of the prosthetic group.

It localises to the cytoplasm. The protein operates within lipid metabolism; fatty acid biosynthesis. Carrier of the growing fatty acid chain in fatty acid biosynthesis. The sequence is that of Acyl carrier protein from Afipia carboxidovorans (strain ATCC 49405 / DSM 1227 / KCTC 32145 / OM5) (Oligotropha carboxidovorans).